The primary structure comprises 435 residues: Prenyltransferase nanD (435 aa).

Glu101 provides a ligand contact to substrate. Residues Arg114, Lys202, and Tyr204 each coordinate dimethylallyl diphosphate. Position 206 (Tyr206) interacts with substrate. 5 residues coordinate dimethylallyl diphosphate: Lys280, Tyr282, Tyr364, Tyr429, and Tyr433.

The protein belongs to the tryptophan dimethylallyltransferase family.

It participates in secondary metabolite biosynthesis. Prenyltransferase; part of the gene cluster that mediates the biosynthesis of the benzazepine alkaloid nanangelenin A which contains an unprecedented 3,4-dihydro-1-benzazepine-2,5-dione-N-prenyl-N-acetoxy-anthranilamide scaffold. The first step of nanangelenin biosynthesis is catalyzed by the indoleamine 2,3-dioxygenase nanC which produces N-formyl-kynurenine through the catabolism of tryptophan. The two-module NRPS nanA then utilizes anthranilate (Ant) and L-kynurenine (L-Kyn) to assemble the dipeptide product nanangelenin B. The first adenylation domain of nanA (A1) loads anthranilate onto the T1 domain, while A2 loads kynurenine, generated through spontaneous nonenzymatic deformylation of the nanC-supplied N-formyl-kynurenine. The peptide bond formation between the tethered amino acids is catalyzed by the first condensation domain (C1) between anthranilate's carbonyl carbon and kynurenine's aliphatic primary amine. The second C domain (C2) catalyzes the final cyclization event between the aromatic amine of kynurenine and the tethered carbonyl carbon, yielding nanangelenin B. The terminal T3 domain enhances the catalytic efficiency of C2, suggesting the T2-tethered Ant-L-Kyn is transferred to T3 prior to cyclization by C2. Once released from nanA, nanangelenin B is then prenylated by the prenyltransferase nanD to form nanangelenin C. Nanangelenin C is then N-hydroxylated by the FAD-dependent monooxygenase nanF and further acetylated by the acetyltransferase nanB to yield nanangelenin F. Finally, the N-methyltransferase nanE methylates the amide nitrogen of 1-benzazepine to convert nanangelenin F into nanangelenin A. NanE is also able to methylate most of the intermediates of the pathway such as nanangelenin B and nanangelenin C to produce nanangelenin D and nanangelenin E, respectively. The sequence is that of Prenyltransferase nanD from Aspergillus nanangensis.